Here is a 289-residue protein sequence, read N- to C-terminus: Phosphoribulokinase (289 aa).

An ATP-binding site is contributed by 12–20 (GSSGAGTTT).

This sequence belongs to the phosphoribulokinase family.

The enzyme catalyses D-ribulose 5-phosphate + ATP = D-ribulose 1,5-bisphosphate + ADP + H(+). Its pathway is carbohydrate biosynthesis; Calvin cycle. The chain is Phosphoribulokinase (cbbP) from Rhizobium meliloti (strain 1021) (Ensifer meliloti).